We begin with the raw amino-acid sequence, 379 residues long: Succinyl-diaminopimelate desuccinylase (379 aa).

His70 is a binding site for Zn(2+). Asp72 is a catalytic residue. Asp103 lines the Zn(2+) pocket. The Proton acceptor role is filled by Glu137. Glu138, Glu166, and His352 together coordinate Zn(2+).

This sequence belongs to the peptidase M20A family. DapE subfamily. Homodimer. Requires Zn(2+) as cofactor. The cofactor is Co(2+).

The enzyme catalyses N-succinyl-(2S,6S)-2,6-diaminopimelate + H2O = (2S,6S)-2,6-diaminopimelate + succinate. Its pathway is amino-acid biosynthesis; L-lysine biosynthesis via DAP pathway; LL-2,6-diaminopimelate from (S)-tetrahydrodipicolinate (succinylase route): step 3/3. Functionally, catalyzes the hydrolysis of N-succinyl-L,L-diaminopimelic acid (SDAP), forming succinate and LL-2,6-diaminopimelate (DAP), an intermediate involved in the bacterial biosynthesis of lysine and meso-diaminopimelic acid, an essential component of bacterial cell walls. The chain is Succinyl-diaminopimelate desuccinylase from Shewanella baltica (strain OS155 / ATCC BAA-1091).